The following is a 377-amino-acid chain: Beta sliding clamp (377 aa).

It belongs to the beta sliding clamp family. As to quaternary structure, forms a ring-shaped head-to-tail homodimer around DNA which binds and tethers DNA polymerases and other proteins to the DNA. The DNA replisome complex has a single clamp-loading complex (3 tau and 1 each of delta, delta', psi and chi subunits) which binds 3 Pol III cores (1 core on the leading strand and 2 on the lagging strand) each with a beta sliding clamp dimer. Additional proteins in the replisome are other copies of gamma, psi and chi, Ssb, DNA helicase and RNA primase.

It is found in the cytoplasm. Functionally, confers DNA tethering and processivity to DNA polymerases and other proteins. Acts as a clamp, forming a ring around DNA (a reaction catalyzed by the clamp-loading complex) which diffuses in an ATP-independent manner freely and bidirectionally along dsDNA. Initially characterized for its ability to contact the catalytic subunit of DNA polymerase III (Pol III), a complex, multichain enzyme responsible for most of the replicative synthesis in bacteria; Pol III exhibits 3'-5' exonuclease proofreading activity. The beta chain is required for initiation of replication as well as for processivity of DNA replication. The chain is Beta sliding clamp (dnaN) from Staphylococcus epidermidis (strain ATCC 35984 / DSM 28319 / BCRC 17069 / CCUG 31568 / BM 3577 / RP62A).